The primary structure comprises 434 residues: Eukaryotic translation initiation factor 3 subunit E (434 aa).

The PCI domain occupies 219–392; the sequence is FFNHPKGRDL…GHVVMGTQPL (174 aa).

It belongs to the eIF-3 subunit E family. Component of the eukaryotic translation initiation factor 3 (eIF-3) complex. The eIF-3 complex interacts with pix. Interacts with mxt.

It is found in the cytoplasm. In terms of biological role, component of the eukaryotic translation initiation factor 3 (eIF-3) complex, which is involved in protein synthesis of a specialized repertoire of mRNAs and, together with other initiation factors, stimulates binding of mRNA and methionyl-tRNAi to the 40S ribosome. The eIF-3 complex specifically targets and initiates translation of a subset of mRNAs involved in cell proliferation. The protein is Eukaryotic translation initiation factor 3 subunit E (eIF3-S6) of Drosophila grimshawi (Hawaiian fruit fly).